A 118-amino-acid polypeptide reads, in one-letter code: Ribonuclease P protein component (118 aa).

It belongs to the RnpA family. As to quaternary structure, consists of a catalytic RNA component (M1 or rnpB) and a protein subunit.

It catalyses the reaction Endonucleolytic cleavage of RNA, removing 5'-extranucleotides from tRNA precursor.. RNaseP catalyzes the removal of the 5'-leader sequence from pre-tRNA to produce the mature 5'-terminus. It can also cleave other RNA substrates such as 4.5S RNA. The protein component plays an auxiliary but essential role in vivo by binding to the 5'-leader sequence and broadening the substrate specificity of the ribozyme. The chain is Ribonuclease P protein component from Shewanella frigidimarina (strain NCIMB 400).